The primary structure comprises 346 residues: Peroxidase 38 (346 aa).

The N-terminal stretch at 1-22 is a signal peptide; sequence MHSSLIKLGFLLLLLQVSLSHA. At Gln23 the chain carries Pyrrolidone carboxylic acid. Cystine bridges form between Cys33/Cys113, Cys66/Cys71, Cys119/Cys323, and Cys199/Cys231. The active-site Proton acceptor is His64. Residues Asp65, Val68, Gly70, Asp72, and Ser74 each contribute to the Ca(2+) site. Asn79 is a glycosylation site (N-linked (GlcNAc...) asparagine). Pro161 lines the substrate pocket. His192 provides a ligand contact to heme b. A Ca(2+)-binding site is contributed by Thr193. The N-linked (GlcNAc...) asparagine glycan is linked to Asn236. Ca(2+) is bound by residues Asp244, Thr247, and Asp252.

The protein belongs to the peroxidase family. Classical plant (class III) peroxidase subfamily. The cofactor is heme b. It depends on Ca(2+) as a cofactor.

It localises to the secreted. The protein resides in the vacuole. The enzyme catalyses 2 a phenolic donor + H2O2 = 2 a phenolic radical donor + 2 H2O. Functionally, removal of H(2)O(2), oxidation of toxic reductants, biosynthesis and degradation of lignin, suberization, auxin catabolism, response to environmental stresses such as wounding, pathogen attack and oxidative stress. These functions might be dependent on each isozyme/isoform in each plant tissue. The chain is Peroxidase 38 (PER38) from Arabidopsis thaliana (Mouse-ear cress).